The sequence spans 645 residues: Envelope glycoprotein (645 aa).

The N-terminal stretch at 1 to 33 (MESPAFSKPLKDKINPWGPLIIMGILVRAGASV) is a signal peptide. The receptor-binding domain (RBD) stretch occupies residues 32 to 237 (SVQRDSPHQV…QVLNVGPRVP (206 aa)). The Extracellular segment spans residues 34–585 (QRDSPHQVFN…FNRSPWFTTL (552 aa)). Asn-43 and Asn-58 each carry an N-linked (GlcNAc...) asparagine; by host glycan. 2 disulfide bridges follow: Cys-113-Cys-130 and Cys-122-Cys-135. The tract at residues 259–286 (PRPPRPPPSGAASMVPGAPPPSQQPGTG) is disordered. Asn-301 carries N-linked (GlcNAc...) asparagine; by host glycosylation. Cystine bridges form between Cys-311-Cys-314, Cys-311-Cys-538, Cys-341-Cys-395, Cys-360-Cys-372, Cys-402-Cys-415, and Cys-530-Cys-537. The CXXC motif lies at 311 to 314 (CWLC). N-linked (GlcNAc...) asparagine; by host glycosylation is found at Asn-333 and Asn-340. N-linked (GlcNAc...) asparagine; by host glycosylation is found at Asn-373 and Asn-409. A fusion peptide region spans residues 447-467 (VSLTLALLLGGLTMGGIAAGV). Residues 490–510 (DLGALEKSVSALEKSLTSLSE) are a coiled coil. The interval 513–529 (LQNRRGLDLLFLKEGGL) is immunosuppression. The short motif at 530–538 (CAALKEECC) is the CX6CC element. A helical transmembrane segment spans residues 586-606 (ISTIMGPLIVLLLILLFGPCI). Residue Cys-605 is the site of S-palmitoyl cysteine; by host attachment. The Cytoplasmic portion of the chain corresponds to 607–640 (LNRLVQFVKDRISVVQALVLTQQYHQLKSIDPEE). A YXXL motif; contains endocytosis signal motif is present at residues 630–633 (YHQL).

As to quaternary structure, the mature envelope protein (Env) consists of a trimer of SU-TM heterodimers attached by a labile interchain disulfide bond. The activated Env consists of SU monomers and TM trimers. Post-translationally, specific enzymatic cleavages in vivo yield mature proteins. Envelope glycoproteins are synthesized as an inactive precursor that is N-glycosylated and processed likely by host cell furin or by a furin-like protease in the Golgi to yield the mature SU and TM proteins. The cleavage site between SU and TM requires the minimal sequence [KR]-X-[KR]-R. The R-peptide is released from the C-terminus of the cytoplasmic tail of the TM protein upon particle formation as a result of proteolytic cleavage by the viral protease. Cleavage of this peptide is required for TM to become fusogenic. In terms of processing, the CXXC motif is highly conserved across a broad range of retroviral envelope proteins. It is thought to participate in the formation of a labile disulfide bond possibly with the CX6CC motif present in the transmembrane protein. Isomerization of the intersubunit disulfide bond to an SU intrachain disulfide bond is thought to occur upon receptor recognition in order to allow membrane fusion. The transmembrane protein is palmitoylated. Post-translationally, the R-peptide is palmitoylated.

The protein resides in the virion membrane. Its subcellular location is the host cell membrane. Functionally, the surface protein (SU) attaches the virus to the host cell by binding to its receptor. This interaction activates a thiol in a CXXC motif of the C-terminal domain, where the other Cys residue participates in the formation of the intersubunit disulfide. The activated thiol will attack the disulfide and cause its isomerization into a disulfide isomer within the motif. This leads to SU displacement and TM refolding, and is thought to activate its fusogenic potential by unmasking its fusion peptide. Fusion occurs at the host cell plasma membrane. Its function is as follows. The transmembrane protein (TM) acts as a class I viral fusion protein. Under the current model, the protein has at least 3 conformational states: pre-fusion native state, pre-hairpin intermediate state, and post-fusion hairpin state. During viral and target cell membrane fusion, the coiled coil regions (heptad repeats) assume a trimer-of-hairpins structure, positioning the fusion peptide in close proximity to the C-terminal region of the ectodomain. The formation of this structure appears to drive apposition and subsequent fusion of viral and target cell membranes. Membranes fusion leads to delivery of the nucleocapsid into the cytoplasm. This chain is Envelope glycoprotein (env), found in Xenotropic MuLV-related virus (isolate VP42) (XMRV).